Here is a 697-residue protein sequence, read N- to C-terminus: Elongation factor G (697 aa).

The region spanning 8 to 283 (ERMRNIGIAA…AVVDYLPSPL (276 aa)) is the tr-type G domain. GTP-binding positions include 17-24 (AHIDAGKT), 81-85 (DTPGH), and 135-138 (NKMD).

It belongs to the TRAFAC class translation factor GTPase superfamily. Classic translation factor GTPase family. EF-G/EF-2 subfamily.

Its subcellular location is the cytoplasm. Its function is as follows. Catalyzes the GTP-dependent ribosomal translocation step during translation elongation. During this step, the ribosome changes from the pre-translocational (PRE) to the post-translocational (POST) state as the newly formed A-site-bound peptidyl-tRNA and P-site-bound deacylated tRNA move to the P and E sites, respectively. Catalyzes the coordinated movement of the two tRNA molecules, the mRNA and conformational changes in the ribosome. The protein is Elongation factor G of Solibacter usitatus (strain Ellin6076).